The primary structure comprises 351 residues: N-acetyl-gamma-glutamyl-phosphate reductase (351 aa).

C154 is an active-site residue.

Belongs to the NAGSA dehydrogenase family. Type 1 subfamily.

It localises to the cytoplasm. The enzyme catalyses N-acetyl-L-glutamate 5-semialdehyde + phosphate + NADP(+) = N-acetyl-L-glutamyl 5-phosphate + NADPH + H(+). Its pathway is amino-acid biosynthesis; L-arginine biosynthesis; N(2)-acetyl-L-ornithine from L-glutamate: step 3/4. Functionally, catalyzes the NADPH-dependent reduction of N-acetyl-5-glutamyl phosphate to yield N-acetyl-L-glutamate 5-semialdehyde. This Prochlorococcus marinus (strain MIT 9312) protein is N-acetyl-gamma-glutamyl-phosphate reductase.